The sequence spans 260 residues: tRNA (guanine-N(1)-)-methyltransferase (260 aa).

S-adenosyl-L-methionine contacts are provided by residues Gly117 and 137–142; that span reads LGDFVL.

This sequence belongs to the RNA methyltransferase TrmD family. As to quaternary structure, homodimer.

The protein localises to the cytoplasm. The catalysed reaction is guanosine(37) in tRNA + S-adenosyl-L-methionine = N(1)-methylguanosine(37) in tRNA + S-adenosyl-L-homocysteine + H(+). In terms of biological role, specifically methylates guanosine-37 in various tRNAs. This Cupriavidus taiwanensis (strain DSM 17343 / BCRC 17206 / CCUG 44338 / CIP 107171 / LMG 19424 / R1) (Ralstonia taiwanensis (strain LMG 19424)) protein is tRNA (guanine-N(1)-)-methyltransferase.